The primary structure comprises 265 residues: MISVGEALAKVRERKPLVHNITNFVVMNTTANALLALGASPVMAHAEEELEEMVRIADSVVVNIGTLDKFWINSMIKAAKLAKEYGKPLVLDPVGAGATRLRTKTALEVLKIGATIVKGNFGEISALLGEEGKTRGVDSSTYDPERAKELALAVAEEFSTIVAVTGKVDYVSDGKRVYAVYNGHELLGRVTGTGCIVAALTGAFVAVNDPLTSAVSSLVVFEVAAEKAAEEAKAPGTFHAKLYDWLYLLTPEDVERLKKIEVVKV.

Substrate is bound at residue methionine 43. ATP-binding residues include lysine 118 and threonine 165. Glycine 192 is a binding site for substrate.

This sequence belongs to the Thz kinase family. The cofactor is Mg(2+).

The enzyme catalyses 5-(2-hydroxyethyl)-4-methylthiazole + ATP = 4-methyl-5-(2-phosphooxyethyl)-thiazole + ADP + H(+). The protein operates within cofactor biosynthesis; thiamine diphosphate biosynthesis; 4-methyl-5-(2-phosphoethyl)-thiazole from 5-(2-hydroxyethyl)-4-methylthiazole: step 1/1. Functionally, catalyzes the phosphorylation of the hydroxyl group of 4-methyl-5-beta-hydroxyethylthiazole (THZ). The protein is Hydroxyethylthiazole kinase of Pyrococcus furiosus (strain ATCC 43587 / DSM 3638 / JCM 8422 / Vc1).